A 285-amino-acid polypeptide reads, in one-letter code: Troponin T, cardiac muscle (285 aa).

Over residues 1–58 the composition is skewed to acidic residues; sequence MSDVEEAVEEYEEQEEAAEEEHEEAVEEEAGGEAEAGEPCTAEDGEEEEGREAEDGPV. 2 disordered regions span residues 1-83 and 111-206; these read MSDV…GERV and RKKE…EKKK. Position 2 is an N-acetylserine (serine 2). Serine 2 carries the post-translational modification Phosphoserine; by CK2. The span at 66 to 77 shows a compositional bias: pro residues; it reads RPFMPNLVPPKI. 2 stretches are compositionally biased toward basic and acidic residues: residues 111 to 171 and 190 to 206; these read RKKE…DEAR and QTER…EKKK. At threonine 191 the chain carries Phosphothreonine; by PKC/PRKCA. Serine 195 carries the phosphoserine; by PKC/PRKCA modification. At threonine 200 the chain carries Phosphothreonine; by PKC/PRKCA and RAF1. Phosphothreonine; by PKC/PRKCA is present on threonine 281.

Belongs to the troponin T family. In terms of processing, the N-terminus is blocked. Phosphorylation at Thr-200 by PRKCA induces significant reduction in myofilament calcium sensitivity and actomyosin ATPase activity.

Functionally, troponin T is the tropomyosin-binding subunit of troponin, the thin filament regulatory complex which confers calcium-sensitivity to striated muscle actomyosin ATPase activity. This chain is Troponin T, cardiac muscle (TNNT2), found in Bos taurus (Bovine).